Consider the following 968-residue polypeptide: RNA polymerase-associated protein RapA (968 aa).

The region spanning 164–334 (DVGRRHAPRV…FARLRLLDPN (171 aa)) is the Helicase ATP-binding domain. 177–184 (DEVGLGKT) is an ATP binding site. The short motif at 280–283 (DEAH) is the DEAH box element. The 173-residue stretch at 490 to 662 (RVEWLMGYLT…YLAAPENTEG (173 aa)) folds into the Helicase C-terminal domain.

The protein belongs to the SNF2/RAD54 helicase family. RapA subfamily. As to quaternary structure, interacts with the RNAP. Has a higher affinity for the core RNAP than for the holoenzyme. Its ATPase activity is stimulated by binding to RNAP.

Functionally, transcription regulator that activates transcription by stimulating RNA polymerase (RNAP) recycling in case of stress conditions such as supercoiled DNA or high salt concentrations. Probably acts by releasing the RNAP, when it is trapped or immobilized on tightly supercoiled DNA. Does not activate transcription on linear DNA. Probably not involved in DNA repair. This chain is RNA polymerase-associated protein RapA, found in Cronobacter sakazakii (strain ATCC BAA-894) (Enterobacter sakazakii).